The following is a 238-amino-acid chain: Transmembrane protein 127 (238 aa).

M1 is subject to N-acetylmethionine. The span at 1 to 11 (MYAPGGAGLPG) shows a compositional bias: gly residues. Residues 1-27 (MYAPGGAGLPGGRRRRSPGGSALPKQP) are disordered. At S17 the chain carries Phosphoserine. 3 helical membrane passes run 96 to 116 (IAAF…LDVF), 130 to 150 (AFAH…SYWA), and 169 to 189 (VYVT…ASIL).

It belongs to the TMEM127 family. As to expression, widely expressed.

The protein localises to the cell membrane. Its subcellular location is the cytoplasm. In terms of biological role, controls cell proliferation acting as a negative regulator of TOR signaling pathway mediated by mTORC1. May act as a tumor suppressor. The protein is Transmembrane protein 127 (TMEM127) of Homo sapiens (Human).